A 126-amino-acid chain; its full sequence is Cystatin-like cysteine protease inhibitor EPIC1 (126 aa).

The first 21 residues, 1 to 21, serve as a signal peptide directing secretion; that stretch reads MTFLRPILALLAATALVTTSA. Asn46 carries an N-linked (GlcNAc...) asparagine glycan. Positions 69-73 match the Secondary area of contact motif; it reads QVVSG.

Belongs to the cystatin family. As to quaternary structure, interacts with the host papain-like cysteine protease RCR3. Interacts with the host papain-like cysteine protease C14.

It is found in the secreted. Its function is as follows. Secreted effector that interacts with and inhibits the pathogenesis-related papain-like cysteine proteases C14 and RCR3 of host plants. Inhibition of host proteases by a pathogen extracellular protease inhibitor forms a specific type of defense-counterdefense mechanism between plants and microbial pathogens. This is Cystatin-like cysteine protease inhibitor EPIC1 from Phytophthora infestans (Potato late blight agent).